The chain runs to 441 residues: MSEVVTAAPAPPVVRLPPAVRGPKLFQGLAFVVSRRRLLGRFVRRYGKAFTANILMYGRVVVVADPQLARQVFTSSPEELGNIQPNLSRMFGSGSVFALDGDDHRRRRRLLAPPFHGKSMKNYETIIEEETLRETANWPQGQAFATLPSMMHITLNAILRAIFGAGGSELDELRRLIPPWVTLGSRLAALPKPKRDYGRLSPWGRLAEWRRQYDTVIDKLIEAERADPNFADRTDVLALMLRSTYDDGSIMSRKDIGDELLTLLAAGHETTAATLGWAFERLSRHPDVLAALVEEVDNGGHELRQAAILEVQRARTVIDFAARRVNPPVYQLGEWVIPRGYSIIINIAQIHGDPDVFPQPDRFDPQRYIGSKPSPFAWIPFGGGTRRCVGAAFANMEMDVVLRTVLRHFTLETTTAAGERSHGRGVAFTPKDGGRVVMRRR.

Position 388 (Cys388) interacts with heme.

It belongs to the cytochrome P450 family. The cofactor is heme.

The chain is Putative cytochrome P450 138 (cyp138) from Mycobacterium bovis (strain ATCC BAA-935 / AF2122/97).